The primary structure comprises 90 residues: Putative defensin-like protein 243 (90 aa).

The first 19 residues, 1-19 (MKVEVIFLASCVLFSLIHA), serve as a signal peptide directing secretion. Disulfide bonds link cysteine 33–cysteine 88, cysteine 43–cysteine 72, cysteine 53–cysteine 82, and cysteine 70–cysteine 84.

It belongs to the DEFL family.

The protein resides in the secreted. This is Putative defensin-like protein 243 (SCRL9) from Arabidopsis thaliana (Mouse-ear cress).